Reading from the N-terminus, the 232-residue chain is Probable anion ABC transporter permease protein HVO_1887 (232 aa).

Residues 16–217 (TAVSLYVSTA…ALVLGVNALG (202 aa)) form the ABC transmembrane type-1 domain. 5 helical membrane-spanning segments follow: residues 23–43 (STAA…AVGF), 55–75 (VIST…LLVL), 93–113 (MILS…LSAV), 146–166 (IVTA…SVLI), and 198–218 (TGIA…ALGA).

This sequence belongs to the binding-protein-dependent transport system permease family. As to quaternary structure, the complex is composed of two ATP-binding proteins (HVO_1886), two transmembrane proteins (HVO_1887) and a solute-binding protein (HVO_1888).

The protein localises to the cell membrane. Functionally, part of an ABC transporter complex involved in anions import. Responsible for the translocation of the substrate across the membrane. This chain is Probable anion ABC transporter permease protein HVO_1887, found in Haloferax volcanii (strain ATCC 29605 / DSM 3757 / JCM 8879 / NBRC 14742 / NCIMB 2012 / VKM B-1768 / DS2) (Halobacterium volcanii).